A 429-amino-acid polypeptide reads, in one-letter code: 3-phosphoshikimate 1-carboxyvinyltransferase (429 aa).

The 3-phosphoshikimate site is built by Lys-22, Ser-23, and Arg-27. Residue Lys-22 participates in phosphoenolpyruvate binding. Positions 94 and 122 each coordinate phosphoenolpyruvate. Positions 167, 169, 315, and 342 each coordinate 3-phosphoshikimate. Residue Gln-169 coordinates phosphoenolpyruvate. The active-site Proton acceptor is the Asp-315. Residues Arg-346 and Arg-388 each contribute to the phosphoenolpyruvate site.

Belongs to the EPSP synthase family. In terms of assembly, monomer.

The protein localises to the cytoplasm. It catalyses the reaction 3-phosphoshikimate + phosphoenolpyruvate = 5-O-(1-carboxyvinyl)-3-phosphoshikimate + phosphate. It participates in metabolic intermediate biosynthesis; chorismate biosynthesis; chorismate from D-erythrose 4-phosphate and phosphoenolpyruvate: step 6/7. Functionally, catalyzes the transfer of the enolpyruvyl moiety of phosphoenolpyruvate (PEP) to the 5-hydroxyl of shikimate-3-phosphate (S3P) to produce enolpyruvyl shikimate-3-phosphate and inorganic phosphate. In Geobacter metallireducens (strain ATCC 53774 / DSM 7210 / GS-15), this protein is 3-phosphoshikimate 1-carboxyvinyltransferase.